Reading from the N-terminus, the 540-residue chain is Chaperonin GroEL (540 aa).

ATP contacts are provided by residues 29–32 (TLGP), 86–90 (DGTTT), Gly413, 476–478 (NAA), and Asp492.

Belongs to the chaperonin (HSP60) family. Forms a cylinder of 14 subunits composed of two heptameric rings stacked back-to-back. Interacts with the co-chaperonin GroES.

It localises to the cytoplasm. The catalysed reaction is ATP + H2O + a folded polypeptide = ADP + phosphate + an unfolded polypeptide.. In terms of biological role, together with its co-chaperonin GroES, plays an essential role in assisting protein folding. The GroEL-GroES system forms a nano-cage that allows encapsulation of the non-native substrate proteins and provides a physical environment optimized to promote and accelerate protein folding. This is Chaperonin GroEL from Streptococcus pneumoniae (strain P1031).